The primary structure comprises 273 residues: 4-hydroxybenzoate octaprenyltransferase (273 aa).

Helical transmembrane passes span 7 to 27 (IGIYLLLWPTLWALFLASEGF), 30 to 50 (LKLLLIFVLGVVLMRSAGCVI), 83 to 103 (FFVLLIMLAFLLVLLTNWLTI), 122 to 142 (WTYFPQFVLGLAFAMSVLMAF), 146 to 166 (LNEIPITAWYVFAATVIWTVI), 197 to 217 (LIIGILQIIFLLILIKISNVF), 221 to 241 (ISYHITLLLVTLLMIYHQYLI), and 253 to 273 (FLHNNYIGMVIFIGIVLSVGL).

The protein belongs to the UbiA prenyltransferase family. Mg(2+) is required as a cofactor.

The protein localises to the cell inner membrane. It catalyses the reaction all-trans-octaprenyl diphosphate + 4-hydroxybenzoate = 4-hydroxy-3-(all-trans-octaprenyl)benzoate + diphosphate. It functions in the pathway cofactor biosynthesis; ubiquinone biosynthesis. Functionally, catalyzes the prenylation of para-hydroxybenzoate (PHB) with an all-trans polyprenyl group. Mediates the second step in the final reaction sequence of ubiquinone-8 (UQ-8) biosynthesis, which is the condensation of the polyisoprenoid side chain with PHB, generating the first membrane-bound Q intermediate 3-octaprenyl-4-hydroxybenzoate. This chain is 4-hydroxybenzoate octaprenyltransferase, found in Vesicomyosocius okutanii subsp. Calyptogena okutanii (strain HA).